Consider the following 217-residue polypeptide: CLA biosynthesis enone reductase (217 aa).

Residues R20, S22, and R24 each contribute to the FMN site. C51 provides a ligand contact to 10-oxooctadecanoate. N78 and Q81 together coordinate FMN. R118 serves as a coordination point for 10-oxooctadecanoate. FMN is bound by residues N165, S168, G169, and R206.

Belongs to the nitroreductase family. Homodimer. FMN is required as a cofactor.

It carries out the reaction 10-oxo-(11E)-octadecenoate + NADH + H(+) = 10-oxooctadecanoate + NAD(+). The protein operates within lipid metabolism; fatty acid metabolism. In terms of biological role, is involved in a saturation metabolic pathway of polyunsaturated fatty acids, that detoxifies unsaturated fatty acids and generates hydroxy fatty acids, oxo fatty acids, conjugated fatty acids such as conjugated linoleic acids (CLAs), and partially saturated trans-fatty acids as intermediates. CLA-ER catalyzes the saturation of the carbon-carbon double bond in 10-oxo-(11E)-octadecenoate to produce 10-oxooctadecanoate, during linoleate metabolism. As part of the gut microbiome, this enzyme modifies host fatty acid composition and is expected to improve human health by altering lipid metabolism related to the onset of metabolic syndrome. In Lactiplantibacillus plantarum (Lactobacillus plantarum), this protein is CLA biosynthesis enone reductase.